The sequence spans 128 residues: Phosphoribosyl-AMP cyclohydrolase (128 aa).

Residue aspartate 77 participates in Mg(2+) binding. Position 78 (cysteine 78) interacts with Zn(2+). Residues aspartate 79 and aspartate 81 each contribute to the Mg(2+) site. Cysteine 94 and cysteine 101 together coordinate Zn(2+).

The protein belongs to the PRA-CH family. As to quaternary structure, homodimer. Mg(2+) is required as a cofactor. The cofactor is Zn(2+).

It is found in the cytoplasm. It carries out the reaction 1-(5-phospho-beta-D-ribosyl)-5'-AMP + H2O = 1-(5-phospho-beta-D-ribosyl)-5-[(5-phospho-beta-D-ribosylamino)methylideneamino]imidazole-4-carboxamide. The protein operates within amino-acid biosynthesis; L-histidine biosynthesis; L-histidine from 5-phospho-alpha-D-ribose 1-diphosphate: step 3/9. Functionally, catalyzes the hydrolysis of the adenine ring of phosphoribosyl-AMP. The polypeptide is Phosphoribosyl-AMP cyclohydrolase (Granulibacter bethesdensis (strain ATCC BAA-1260 / CGDNIH1)).